We begin with the raw amino-acid sequence, 252 residues long: Acyltransferase PGAP2 (252 aa).

The Cytoplasmic portion of the chain corresponds to 1–22 (MVPVGPERGANSLFSLRFTTFA). Residues 23 to 43 (VGTVSLPLFAFLFCIVWSLLF) form a helical membrane-spanning segment. Topologically, residues 44–77 (NFSETTATHCHVPNYLPSVSAAIGGETPQRYIWR) are lumenal. Residues 78–98 (LCIGLHSAPRFLVGVAYLHYY) traverse the membrane as a helical segment. Residues 99 to 111 (QGTPCSSPAYPRL) are Cytoplasmic-facing. A helical membrane pass occupies residues 112–132 (CHLNFLLNCCEIFFLILLTYV). At 133–142 (SSSENYEVHK) the chain is on the lumenal side. The chain crosses the membrane as a helical span at residues 143 to 163 (LGFMAFMLFSVGYMFVTCSLW). Over 164-184 (RVARKGSGSLEERTSYAWKKR) the chain is Cytoplasmic. The helical transmembrane segment at 185-205 (LFGFYLLMFLSSILVYIWHNM) threads the bilayer. Residues 206 to 208 (YCE) are Lumenal-facing. A helical transmembrane segment spans residues 209–229 (AGVYTVFALLEYLVVLSNMGF). Over 230–252 (HMTAWWDFGNKELMICSPGDKRI) the chain is Cytoplasmic.

This sequence belongs to the PGAP2 family.

Its subcellular location is the golgi apparatus membrane. In terms of biological role, involved in the fatty acid remodeling steps of GPI-anchor maturation where the unsaturated acyl chain at sn-2 of inositol phosphate is replaced by a saturated stearoyl chain. May catalyze the second step of the fatty acid remodeling, by reacylating a lyso-GPI intermediate at sn-2 of inositol phosphate by a saturated chain. The fatty acid remodeling steps is critical for the integration of GPI-APs into lipid rafts. This chain is Acyltransferase PGAP2, found in Xenopus tropicalis (Western clawed frog).